Consider the following 186-residue polypeptide: Large ribosomal subunit protein uL15 (186 aa).

Positions 1 to 48 (MDLSSLRPAKGAVKARKRVGRGPGSGNGTTAGKGNKGQQSRSGYQRPV) are disordered. Over residues 21 to 35 (RGPGSGNGTTAGKGN) the composition is skewed to gly residues.

Belongs to the universal ribosomal protein uL15 family. Part of the 50S ribosomal subunit.

Functionally, binds to the 23S rRNA. This Chlorobaculum tepidum (strain ATCC 49652 / DSM 12025 / NBRC 103806 / TLS) (Chlorobium tepidum) protein is Large ribosomal subunit protein uL15.